Reading from the N-terminus, the 628-residue chain is Translation factor GUF1, mitochondrial (628 aa).

Residues 27 to 209 (LPSRNFSIIA…AIISRIPPPS (183 aa)) enclose the tr-type G domain. GTP-binding positions include 36 to 43 (AHIDHGKS), 102 to 106 (DTPGH), and 156 to 159 (NKID).

This sequence belongs to the TRAFAC class translation factor GTPase superfamily. Classic translation factor GTPase family. LepA subfamily.

It is found in the mitochondrion inner membrane. The enzyme catalyses GTP + H2O = GDP + phosphate + H(+). Functionally, promotes mitochondrial protein synthesis. May act as a fidelity factor of the translation reaction, by catalyzing a one-codon backward translocation of tRNAs on improperly translocated ribosomes. Binds to mitochondrial ribosomes in a GTP-dependent manner. The chain is Translation factor GUF1, mitochondrial from Laccaria bicolor (strain S238N-H82 / ATCC MYA-4686) (Bicoloured deceiver).